We begin with the raw amino-acid sequence, 531 residues long: T-complex protein 1 subunit zeta (531 aa).

N-acetylalanine is present on alanine 2. N6-acetyllysine is present on lysine 5. An ADP-binding site is contributed by glycine 39. Glycine 39 contacts ATP. Aspartate 90 is a Mg(2+) binding site. ADP contacts are provided by glycine 91, threonine 92, threonine 93, serine 94, threonine 158, and lysine 159. Residues glycine 91, threonine 92, and threonine 93 each contribute to the ATP site. Lysine 199 is modified (N6-acetyllysine). A Phosphoserine modification is found at serine 205. Lysine 251 is covalently cross-linked (Glycyl lysine isopeptide (Lys-Gly) (interchain with G-Cter in SUMO2)). An N6-acetyllysine mark is found at lysine 287, lysine 365, lysine 377, and lysine 388. ADP is bound at residue alanine 411. ATP is bound by residues alanine 411, glycine 412, aspartate 496, and lysine 501. Aspartate 496 is an ADP binding site.

Belongs to the TCP-1 chaperonin family. Component of the chaperonin-containing T-complex (TRiC), a hexadecamer composed of two identical back-to-back stacked rings enclosing a protein folding chamber. Each ring is made up of eight different subunits: TCP1/CCT1, CCT2, CCT3, CCT4, CCT5, CCT6A/CCT6, CCT7, CCT8. Interacts with PACRG.

It is found in the cytoplasm. The catalysed reaction is ATP + H2O = ADP + phosphate + H(+). Its function is as follows. Component of the chaperonin-containing T-complex (TRiC), a molecular chaperone complex that assists the folding of actin, tubulin and other proteins upon ATP hydrolysis. The TRiC complex mediates the folding of WRAP53/TCAB1, thereby regulating telomere maintenance. This is T-complex protein 1 subunit zeta (CCT6A) from Homo sapiens (Human).